Here is a 194-residue protein sequence, read N- to C-terminus: Putative manganese efflux pump MntP (194 aa).

6 helical membrane-spanning segments follow: residues 2 to 22 (ISII…AFAV), 43 to 63 (LWFG…ASTF), 67 to 87 (VTQF…GNMV), 111 to 131 (PLAV…AFMF), 137 to 157 (AFAI…GLHI), and 174 to 194 (GVVL…VIAF).

It belongs to the MntP (TC 9.B.29) family.

Its subcellular location is the cell membrane. Its function is as follows. Probably functions as a manganese efflux pump. This is Putative manganese efflux pump MntP from Bifidobacterium longum (strain DJO10A).